Here is a 117-residue protein sequence, read N- to C-terminus: Ribonuclease P protein component (117 aa).

This sequence belongs to the RnpA family. In terms of assembly, consists of a catalytic RNA component (M1 or rnpB) and a protein subunit.

The catalysed reaction is Endonucleolytic cleavage of RNA, removing 5'-extranucleotides from tRNA precursor.. Its function is as follows. RNaseP catalyzes the removal of the 5'-leader sequence from pre-tRNA to produce the mature 5'-terminus. It can also cleave other RNA substrates such as 4.5S RNA. The protein component plays an auxiliary but essential role in vivo by binding to the 5'-leader sequence and broadening the substrate specificity of the ribozyme. The polypeptide is Ribonuclease P protein component (Staphylococcus aureus (strain MW2)).